The sequence spans 315 residues: Transaldolase (315 aa).

The active-site Schiff-base intermediate with substrate is the lysine 131.

This sequence belongs to the transaldolase family. Type 1 subfamily. In terms of assembly, homodimer.

Its subcellular location is the cytoplasm. The enzyme catalyses D-sedoheptulose 7-phosphate + D-glyceraldehyde 3-phosphate = D-erythrose 4-phosphate + beta-D-fructose 6-phosphate. Its pathway is carbohydrate degradation; pentose phosphate pathway; D-glyceraldehyde 3-phosphate and beta-D-fructose 6-phosphate from D-ribose 5-phosphate and D-xylulose 5-phosphate (non-oxidative stage): step 2/3. Functionally, transaldolase is important for the balance of metabolites in the pentose-phosphate pathway. In Haemophilus ducreyi (strain 35000HP / ATCC 700724), this protein is Transaldolase.